Reading from the N-terminus, the 232-residue chain is MSANMHIFENPSALAEALADDVGARLAAAIAARGTASLAVSGGSTPKAFFRSLSRRELDWSKVTVTLVDERFVPPENDRSNHRLVADNLLKDGAAEARFVPLYQAAETAEAAAAIASGRTASLGAPLDVVVLGMGTDGHTASFFPGGTRLEEALDPTTPRGVITMEAEGAGEPRLTFTFSSLQDAGYLVLHIEGSGKKEVLAQAEASGDEAEMPIRAMLRRAASPLQIYWAP.

The protein belongs to the glucosamine/galactosamine-6-phosphate isomerase family. 6-phosphogluconolactonase subfamily.

The catalysed reaction is 6-phospho-D-glucono-1,5-lactone + H2O = 6-phospho-D-gluconate + H(+). It functions in the pathway carbohydrate degradation; pentose phosphate pathway; D-ribulose 5-phosphate from D-glucose 6-phosphate (oxidative stage): step 2/3. Its function is as follows. Hydrolysis of 6-phosphogluconolactone to 6-phosphogluconate. In Rhizobium meliloti (strain 1021) (Ensifer meliloti), this protein is 6-phosphogluconolactonase (pgl).